The primary structure comprises 176 residues: RNA pyrophosphohydrolase (176 aa).

The Nudix hydrolase domain occupies 6 to 149 (GYRPNVGIIL…KRQVYQQALF (144 aa)). Positions 38–59 (GGIKHGESPEQAMFRELFEEVG) match the Nudix box motif.

It belongs to the Nudix hydrolase family. RppH subfamily. A divalent metal cation is required as a cofactor.

Accelerates the degradation of transcripts by removing pyrophosphate from the 5'-end of triphosphorylated RNA, leading to a more labile monophosphorylated state that can stimulate subsequent ribonuclease cleavage. The polypeptide is RNA pyrophosphohydrolase (Aromatoleum aromaticum (strain DSM 19018 / LMG 30748 / EbN1) (Azoarcus sp. (strain EbN1))).